Consider the following 321-residue polypeptide: MNRPERLQPGVKLRDADKVARIPVKIVPSERETMLRKPDWLRVKLPASNQRILEIKAALRKNGLHSVCEEASCPNLSECFNHGTATFMILGAICTRRCPFCDVAHGRPLKPDAEEPVKLAQTIRDMKLKYVVITSVDRDDLRDGGAQHFADCIREIRKLNPDIKIETLVPDFRGRIDAALDILSAEPPDVFNHNLETAPAHYRKARPGANYQWSLDLLKRFKERHPHIPTKSGLMMGLGETNEEIAEVLRDLRSHNVEMLTLGQYLQPSKFHLPVVRYVPPAEFDELKVLADELGFTHAACGPMVRSSYHADLQAQGKEVK.

[4Fe-4S] cluster-binding residues include C68, C73, C79, C94, C98, C101, and S308. The Radical SAM core domain occupies 80–297 (FNHGTATFMI…KVLADELGFT (218 aa)).

Belongs to the radical SAM superfamily. Lipoyl synthase family. It depends on [4Fe-4S] cluster as a cofactor.

The protein resides in the cytoplasm. It carries out the reaction [[Fe-S] cluster scaffold protein carrying a second [4Fe-4S](2+) cluster] + N(6)-octanoyl-L-lysyl-[protein] + 2 oxidized [2Fe-2S]-[ferredoxin] + 2 S-adenosyl-L-methionine + 4 H(+) = [[Fe-S] cluster scaffold protein] + N(6)-[(R)-dihydrolipoyl]-L-lysyl-[protein] + 4 Fe(3+) + 2 hydrogen sulfide + 2 5'-deoxyadenosine + 2 L-methionine + 2 reduced [2Fe-2S]-[ferredoxin]. It functions in the pathway protein modification; protein lipoylation via endogenous pathway; protein N(6)-(lipoyl)lysine from octanoyl-[acyl-carrier-protein]: step 2/2. Catalyzes the radical-mediated insertion of two sulfur atoms into the C-6 and C-8 positions of the octanoyl moiety bound to the lipoyl domains of lipoate-dependent enzymes, thereby converting the octanoylated domains into lipoylated derivatives. The protein is Lipoyl synthase of Shewanella denitrificans (strain OS217 / ATCC BAA-1090 / DSM 15013).